The sequence spans 325 residues: Glycerol-3-phosphate dehydrogenase [NAD(P)+] (325 aa).

NADPH is bound by residues S14, F15, R35, and K109. Residues K109 and G137 each coordinate sn-glycerol 3-phosphate. A141 is a binding site for NADPH. 5 residues coordinate sn-glycerol 3-phosphate: K192, D247, S257, R258, and N259. Catalysis depends on K192, which acts as the Proton acceptor. Residue R258 participates in NADPH binding. 2 residues coordinate NADPH: L282 and E284.

This sequence belongs to the NAD-dependent glycerol-3-phosphate dehydrogenase family.

Its subcellular location is the cytoplasm. The enzyme catalyses sn-glycerol 3-phosphate + NAD(+) = dihydroxyacetone phosphate + NADH + H(+). It catalyses the reaction sn-glycerol 3-phosphate + NADP(+) = dihydroxyacetone phosphate + NADPH + H(+). Its pathway is membrane lipid metabolism; glycerophospholipid metabolism. In terms of biological role, catalyzes the reduction of the glycolytic intermediate dihydroxyacetone phosphate (DHAP) to sn-glycerol 3-phosphate (G3P), the key precursor for phospholipid synthesis. This chain is Glycerol-3-phosphate dehydrogenase [NAD(P)+], found in Rickettsia africae (strain ESF-5).